Consider the following 277-residue polypeptide: ATP synthase subunit a (277 aa).

The next 5 membrane-spanning stretches (helical) occupy residues 40-60, 98-118, 154-174, 219-239, and 245-265; these read AWHVDTLAWSIGLGLLFLIIF, SALIAPLALTIFVWVLLMNLM, DLNLTFALASGVFILILFYSI, LFGNLYASELIFILIATIGYF, and FMWAVFHILVLPLQAFIFMML.

Belongs to the ATPase A chain family. As to quaternary structure, F-type ATPases have 2 components, CF(1) - the catalytic core - and CF(0) - the membrane proton channel. CF(1) has five subunits: alpha(3), beta(3), gamma(1), delta(1), epsilon(1). CF(0) has three main subunits: a(1), b(2) and c(9-12). The alpha and beta chains form an alternating ring which encloses part of the gamma chain. CF(1) is attached to CF(0) by a central stalk formed by the gamma and epsilon chains, while a peripheral stalk is formed by the delta and b chains.

The protein resides in the cell inner membrane. Key component of the proton channel; it plays a direct role in the translocation of protons across the membrane. The sequence is that of ATP synthase subunit a from Alteromonas mediterranea (strain DSM 17117 / CIP 110805 / LMG 28347 / Deep ecotype).